Reading from the N-terminus, the 258-residue chain is Aspartate/glutamate leucyltransferase (258 aa).

The protein belongs to the R-transferase family. Bpt subfamily.

Its subcellular location is the cytoplasm. The catalysed reaction is N-terminal L-glutamyl-[protein] + L-leucyl-tRNA(Leu) = N-terminal L-leucyl-L-glutamyl-[protein] + tRNA(Leu) + H(+). It carries out the reaction N-terminal L-aspartyl-[protein] + L-leucyl-tRNA(Leu) = N-terminal L-leucyl-L-aspartyl-[protein] + tRNA(Leu) + H(+). In terms of biological role, functions in the N-end rule pathway of protein degradation where it conjugates Leu from its aminoacyl-tRNA to the N-termini of proteins containing an N-terminal aspartate or glutamate. This Rhodopseudomonas palustris (strain TIE-1) protein is Aspartate/glutamate leucyltransferase.